The primary structure comprises 554 residues: (E)-nerolidol synthase TPS18VF (554 aa).

(2E,6E)-farnesyl diphosphate contacts are provided by Arg-276, Asp-313, Asp-317, Arg-455, and Asp-458. Residues Asp-313 and Asp-317 each contribute to the Mg(2+) site. Residues 313–317 (DDIFD) carry the DDXXD motif motif. Mg(2+) is bound by residues Asp-458, Ser-462, and Glu-466.

The protein belongs to the terpene synthase family. Tpsb subfamily. It depends on Mg(2+) as a cofactor. Mn(2+) serves as cofactor. In terms of tissue distribution, highly expressed in glandular trichomes.

The enzyme catalyses (2E,6E)-farnesyl diphosphate + H2O = (6E)-nerolidol + diphosphate. The catalysed reaction is (2E)-geranyl diphosphate + H2O = (R)-linalool + diphosphate. It carries out the reaction (2E)-geranyl diphosphate + H2O = (S)-linalool + diphosphate. It participates in secondary metabolite biosynthesis; terpenoid biosynthesis. Functionally, involved in sesquiterpene olefins biosynthesis, constituants of cannabinoids and terpenoids-rich resins. Catalyzes primarily the conversion of (2E)-farnesyl diphosphate to (E)-nerolidol, and the conversion of (2E)-geranyl diphosphate to (+)linalool and (-)linalool. This is (E)-nerolidol synthase TPS18VF from Cannabis sativa (Hemp).